A 467-amino-acid chain; its full sequence is Glutamate--tRNA ligase (467 aa).

The short motif at 9–19 (PSPTGYLHIGG) is the 'HIGH' region element. The short motif at 237 to 241 (KLSKR) is the 'KMSKS' region element. Lys240 is an ATP binding site.

Belongs to the class-I aminoacyl-tRNA synthetase family. Glutamate--tRNA ligase type 1 subfamily. In terms of assembly, monomer.

Its subcellular location is the cytoplasm. It catalyses the reaction tRNA(Glu) + L-glutamate + ATP = L-glutamyl-tRNA(Glu) + AMP + diphosphate. In terms of biological role, catalyzes the attachment of glutamate to tRNA(Glu) in a two-step reaction: glutamate is first activated by ATP to form Glu-AMP and then transferred to the acceptor end of tRNA(Glu). This is Glutamate--tRNA ligase from Xylella fastidiosa (strain M12).